The following is a 297-amino-acid chain: Cell division protein ZipA (297 aa).

Position 1 (M1) is a topological domain, periplasmic. The helical transmembrane segment at 2–22 (EIGLREWLILIGIIVIAGILF) threads the bilayer. Over 23 to 297 (DGWRRMRGGK…FERRALTQKR (275 aa)) the chain is Cytoplasmic. The tract at residues 48-151 (DEEGGSAEVL…AAPASNSVKE (104 aa)) is disordered. The segment covering 83 to 92 (ARDREREPKP) has biased composition (basic and acidic residues). The segment covering 124–133 (LFSDSDDDFA) has biased composition (acidic residues).

Belongs to the ZipA family. Interacts with FtsZ via their C-terminal domains.

It is found in the cell inner membrane. In terms of biological role, essential cell division protein that stabilizes the FtsZ protofilaments by cross-linking them and that serves as a cytoplasmic membrane anchor for the Z ring. Also required for the recruitment to the septal ring of downstream cell division proteins. The protein is Cell division protein ZipA of Pseudomonas putida (strain ATCC 47054 / DSM 6125 / CFBP 8728 / NCIMB 11950 / KT2440).